The following is a 111-amino-acid chain: Latartoxin-2b (111 aa).

A signal peptide spans 1–19; sequence MKVLVIIALCFFILQTALS. A propeptide spans 20 to 43 (removed in mature form); sequence EDKYESFESYVEDLKSGNMKGEAR. The short motif at 40–43 is the Processing quadruplet motif element; sequence GEAR. 5 disulfide bridges follow: Cys45–Cys62, Cys52–Cys73, Cys61–Cys87, Cys75–Cys85, and Cys78–Cys99. Val110 carries the post-translational modification Valine amide.

The protein belongs to the neurotoxin 19 (CSTX) family. 11 (latartoxin) subfamily. Contains 5 disulfide bonds. In terms of processing, cleavage of the propeptide depends on the processing quadruplet motif (XXXR, with at least one of X being E). As to expression, expressed by the venom gland.

Its subcellular location is the secreted. Functionally, insect toxin. This chain is Latartoxin-2b, found in Lachesana tarabaevi (Spider).